A 746-amino-acid polypeptide reads, in one-letter code: NAD(P)H-quinone oxidoreductase subunit 5, chloroplastic (746 aa).

16 helical membrane passes run 9–29 (WIIP…LLLF), 40–60 (WTFL…YLSI), 89–109 (IDPL…LVLI), 125–145 (FAYM…SNLI), 147–167 (VYFF…FWFT), 185–205 (GDFG…SFEF), 221–241 (VNLL…IAKS), 258–278 (TPIS…FLVA), 280–300 (LLPL…IGII), 327–347 (LGYM…FHLI), 354–374 (ALLF…VGYS), 396–416 (TAFL…CFWS), 425–445 (LLFS…TAFY), 547–567 (ILFP…IGIP), 608–628 (FSVS…KPFY), and 723–743 (YLFL…FFYF).

Belongs to the complex I subunit 5 family. NDH is composed of at least 16 different subunits, 5 of which are encoded in the nucleus.

The protein localises to the plastid. It is found in the chloroplast thylakoid membrane. The catalysed reaction is a plastoquinone + NADH + (n+1) H(+)(in) = a plastoquinol + NAD(+) + n H(+)(out). The enzyme catalyses a plastoquinone + NADPH + (n+1) H(+)(in) = a plastoquinol + NADP(+) + n H(+)(out). Its function is as follows. NDH shuttles electrons from NAD(P)H:plastoquinone, via FMN and iron-sulfur (Fe-S) centers, to quinones in the photosynthetic chain and possibly in a chloroplast respiratory chain. The immediate electron acceptor for the enzyme in this species is believed to be plastoquinone. Couples the redox reaction to proton translocation, and thus conserves the redox energy in a proton gradient. The polypeptide is NAD(P)H-quinone oxidoreductase subunit 5, chloroplastic (ndhF) (Arabidopsis thaliana (Mouse-ear cress)).